Reading from the N-terminus, the 265-residue chain is Undecaprenyl-diphosphatase (265 aa).

Helical transmembrane passes span 42–62, 82–102, 108–128, 143–163, 181–201, 221–241, and 248–264; these read ATTFEVAIQLGAILAVVVLYW, GIMLLLLTSLPASVLGLAAHS, LFTPSTVAIALAVGAIFMLLV, MSPALALGIGCFQCLALWPGF, GLAAEYSFIAAVPIMFAATGY, GFVVSFLSAWAAVKLFIALVG, and FAWYRLAIAPLVYYFMA.

Belongs to the UppP family.

Its subcellular location is the cell inner membrane. It carries out the reaction di-trans,octa-cis-undecaprenyl diphosphate + H2O = di-trans,octa-cis-undecaprenyl phosphate + phosphate + H(+). Its function is as follows. Catalyzes the dephosphorylation of undecaprenyl diphosphate (UPP). Confers resistance to bacitracin. This chain is Undecaprenyl-diphosphatase, found in Nitratidesulfovibrio vulgaris (strain ATCC 29579 / DSM 644 / CCUG 34227 / NCIMB 8303 / VKM B-1760 / Hildenborough) (Desulfovibrio vulgaris).